Here is a 341-residue protein sequence, read N- to C-terminus: Anthranilate phosphoribosyltransferase (341 aa).

5-phospho-alpha-D-ribose 1-diphosphate contacts are provided by residues G82, 85–86 (GD), T90, 92–95 (NIST), 110–118 (KHGGRSVSG), and S122. An anthranilate-binding site is contributed by G82. Position 94 (S94) interacts with Mg(2+). R168 contacts anthranilate. Mg(2+) is bound by residues D227 and E228.

It belongs to the anthranilate phosphoribosyltransferase family. In terms of assembly, homodimer. Mg(2+) is required as a cofactor.

It carries out the reaction N-(5-phospho-beta-D-ribosyl)anthranilate + diphosphate = 5-phospho-alpha-D-ribose 1-diphosphate + anthranilate. It functions in the pathway amino-acid biosynthesis; L-tryptophan biosynthesis; L-tryptophan from chorismate: step 2/5. Functionally, catalyzes the transfer of the phosphoribosyl group of 5-phosphorylribose-1-pyrophosphate (PRPP) to anthranilate to yield N-(5'-phosphoribosyl)-anthranilate (PRA). The sequence is that of Anthranilate phosphoribosyltransferase from Nitrosomonas europaea (strain ATCC 19718 / CIP 103999 / KCTC 2705 / NBRC 14298).